Here is a 331-residue protein sequence, read N- to C-terminus: Biotin synthase (331 aa).

In terms of domain architecture, Radical SAM core spans 52–277 (PEVEVEGIVS…RTILRYAGGR (226 aa)). The [4Fe-4S] cluster site is built by Cys67, Cys71, and Cys74. Cys110, Cys202, and Arg272 together coordinate [2Fe-2S] cluster.

The protein belongs to the radical SAM superfamily. Biotin synthase family. Homodimer. [4Fe-4S] cluster is required as a cofactor. The cofactor is [2Fe-2S] cluster.

The enzyme catalyses (4R,5S)-dethiobiotin + (sulfur carrier)-SH + 2 reduced [2Fe-2S]-[ferredoxin] + 2 S-adenosyl-L-methionine = (sulfur carrier)-H + biotin + 2 5'-deoxyadenosine + 2 L-methionine + 2 oxidized [2Fe-2S]-[ferredoxin]. The protein operates within cofactor biosynthesis; biotin biosynthesis; biotin from 7,8-diaminononanoate: step 2/2. In terms of biological role, catalyzes the conversion of dethiobiotin (DTB) to biotin by the insertion of a sulfur atom into dethiobiotin via a radical-based mechanism. This is Biotin synthase from Salinispora arenicola (strain CNS-205).